A 330-amino-acid polypeptide reads, in one-letter code: Phosphate acyltransferase (330 aa).

The protein belongs to the PlsX family. In terms of assembly, homodimer. Probably interacts with PlsY.

The protein resides in the cytoplasm. It carries out the reaction a fatty acyl-[ACP] + phosphate = an acyl phosphate + holo-[ACP]. It functions in the pathway lipid metabolism; phospholipid metabolism. Catalyzes the reversible formation of acyl-phosphate (acyl-PO(4)) from acyl-[acyl-carrier-protein] (acyl-ACP). This enzyme utilizes acyl-ACP as fatty acyl donor, but not acyl-CoA. This Bacillus thuringiensis (strain Al Hakam) protein is Phosphate acyltransferase.